The following is a 361-amino-acid chain: MFMNKKVMIGMSGGVDSSVAAYLLKQQGYDVIGVTMKLWQDDDVVEIEGGCCSLSAVEDARRVANKIGIPFYVLNFREVFKEKVIDYFIDEYLEGKTPNPCIACNKHIKFDDFYKKARQIGCDYVATGHYAKIEKDESTGRYLLKKSVTDKKDQTYALYNLTQEQLEHTLLPIGDYEKDRVREIAKEMGMAVHNKPDSQEICFVKDNDYANYVKKHSKKRIEEGFFVDTKGNILGKHKGILYYTIGQRKGLGITFGKPMFVIDINPINNTIVLGDNEDLFKKELIAKDVNFISIDTLEEPLRVQAKIRYSAKPSPATIHRVGEDTIKIVFDEAQRAITKGQSVVMYDGDIVVGGGIIEKSL.

ATP is bound by residues 10–17 (GMSGGVDS) and Met-36. Residue Cys-104 is the Nucleophile of the active site. Cys-104 and Cys-202 form a disulfide bridge. Gly-128 is an ATP binding site. Residues 152–154 (KDQ) form an interaction with tRNA region. Cys-202 serves as the catalytic Cysteine persulfide intermediate. Positions 308–309 (RY) are interaction with tRNA.

It belongs to the MnmA/TRMU family.

The protein localises to the cytoplasm. The enzyme catalyses S-sulfanyl-L-cysteinyl-[protein] + uridine(34) in tRNA + AH2 + ATP = 2-thiouridine(34) in tRNA + L-cysteinyl-[protein] + A + AMP + diphosphate + H(+). Its function is as follows. Catalyzes the 2-thiolation of uridine at the wobble position (U34) of tRNA, leading to the formation of s(2)U34. The sequence is that of tRNA-specific 2-thiouridylase MnmA from Clostridioides difficile (strain 630) (Peptoclostridium difficile).